The chain runs to 510 residues: Dolichyl-P-Man:Man5GlcNAc2-PP-dolichol alpha-1,3-mannosyltransferase Alg3 (510 aa).

The Cytoplasmic portion of the chain corresponds to 1–43 (MAPPKAASHRPAVRRKKSGTLVDSILDKYLNVRFFKYLLLEPA). Residues 44-64 (ALPIVGLFVLLAELVINVVVI) traverse the membrane as a helical segment. Residues 65–97 (QRVPYTEIDWVAYMQECEGFLNGTTNYSLLRGD) are Lumenal-facing. Residues 98-118 (TGPLVYPAAFVYIYSALYYVT) form a helical membrane-spanning segment. Residues 119-125 (SHGTNVR) lie on the Cytoplasmic side of the membrane. A helical membrane pass occupies residues 126 to 146 (LAQYIFAGIYLLQLALVLRLY). The Lumenal segment spans residues 147–171 (SKSRKVPPYVLVLSAFTSYRIHSIY). The helical transmembrane segment at 172–192 (VLRLFNDPVAVLLLYAALNLF) threads the bilayer. Residues 193–211 (LDRRWTLGSTFFSLAVGVK) lie on the Cytoplasmic side of the membrane. Residues 212–232 (MNILLFAPALLLFYLANLGLL) traverse the membrane as a helical segment. Residue Arg-233 is a topological domain, lumenal. A helical membrane pass occupies residues 234-254 (TILQLAVCGVIQLLLGAPFLL). At 255–294 (THPVEYLRGSFDLGRIFEHKWTVNYRFLSRDVFENRTFHV) the chain is on the cytoplasmic side. The chain crosses the membrane as a helical span at residues 295–315 (SLLGLHLLLLLAFAKPIWTFF). Topologically, residues 316-403 (QSYVRLRRIE…YGIHFDRCTQ (88 aa)) are lumenal. The interval 337–358 (LQLKAQKRPKKVEKDKDKDQKK) is disordered. The span at 348–358 (VEKDKDKDQKK) shows a compositional bias: basic and acidic residues. The helical transmembrane segment at 404-424 (LALLPFFLCNLVGVACSRSLH) threads the bilayer. Over 425–426 (YQ) the chain is Cytoplasmic. A helical transmembrane segment spans residues 427 to 447 (FYVWYFHSLPYLAWSTPYSLG). The Lumenal portion of the chain corresponds to 448 to 464 (VRCLILGLIEYCWNTYP). A helical membrane pass occupies residues 465-485 (STNFSSAALHFTHIILLAGVA). At 486 to 510 (KQLIQTMRINNAAKREQQEQQKKLQ) the chain is on the cytoplasmic side.

It belongs to the glycosyltransferase ALG3 family.

It is found in the endoplasmic reticulum membrane. It catalyses the reaction an alpha-D-Man-(1-&gt;2)-alpha-D-Man-(1-&gt;2)-alpha-D-Man-(1-&gt;3)-[alpha-D-Man-(1-&gt;6)]-beta-D-Man-(1-&gt;4)-beta-D-GlcNAc-(1-&gt;4)-alpha-D-GlcNAc-diphospho-di-trans,poly-cis-dolichol + a di-trans,poly-cis-dolichyl beta-D-mannosyl phosphate = an alpha-D-Man-(1-&gt;2)-alpha-D-Man-(1-&gt;2)-alpha-D-Man-(1-&gt;3)-[alpha-D-Man-(1-&gt;3)-alpha-D-Man-(1-&gt;6)]-beta-D-Man-(1-&gt;4)-beta-D-GlcNAc-(1-&gt;4)-alpha-D-GlcNAc-diphospho-di-trans,poly-cis-dolichol + a di-trans,poly-cis-dolichyl phosphate + H(+). The protein operates within protein modification; protein glycosylation. Functionally, probable alpha-1,3-mannosyltransferase involved in the N-glycosylation pathway. Involved in glycosylation of the TNF receptor grnd, regulating its ligand affinity. Required for normal epithelial growth and architecture. Suppressor of JNK-dependent intestinal stem cell proliferation. In Drosophila melanogaster (Fruit fly), this protein is Dolichyl-P-Man:Man5GlcNAc2-PP-dolichol alpha-1,3-mannosyltransferase Alg3.